Reading from the N-terminus, the 62-residue chain is Large ribosomal subunit protein bL28 (62 aa).

Belongs to the bacterial ribosomal protein bL28 family.

The protein is Large ribosomal subunit protein bL28 of Phytoplasma mali (strain AT).